We begin with the raw amino-acid sequence, 280 residues long: MQEVISYIQKAVLEISNALKFPDTSYSQNQNFTGDTQLKFDVLSDEIITKTLSQCSSIKAIISEEKDEILTLNEKAKLIVAYDPLDGSSLMDVNFAIGSIFAIYEEKASAKKLRAALYSMYGARLELVICKEQPKLYRLNANNEFIFIKDLKINEKGKINATGGTQKFWEEKHAKFIKSLFDEGYRLRYSGAMVSDINQILLKGGGIFSYPATQDAPNGKLRAFFEVFPLAFIIEKAGGKTTNGKNHSLLELEFDKIHATTPCFFGSKYEISKLLKAYNE.

Positions 64, 83, 85, and 86 each coordinate Mg(2+). Residues 86-89, tyrosine 189, and lysine 220 contribute to the substrate site; that span reads DGSS. Glutamate 226 is a Mg(2+) binding site.

This sequence belongs to the FBPase class 1 family. As to quaternary structure, homotetramer. Requires Mg(2+) as cofactor.

Its subcellular location is the cytoplasm. The enzyme catalyses beta-D-fructose 1,6-bisphosphate + H2O = beta-D-fructose 6-phosphate + phosphate. Its pathway is carbohydrate biosynthesis; gluconeogenesis. The polypeptide is Fructose-1,6-bisphosphatase class 1 (Campylobacter jejuni subsp. doylei (strain ATCC BAA-1458 / RM4099 / 269.97)).